Consider the following 595-residue polypeptide: Phytoene desaturase (595 aa).

A signal peptide spans 1 to 23 (MAETQRPRSAIIVGAGAGGIAVA). The chain crosses the membrane as a helical span at residues 574-594 (SQRAFPLLVALMGVLYFLLFV).

It belongs to the carotenoid/retinoid oxidoreductase family. NAD(+) serves as cofactor.

It localises to the membrane. The enzyme catalyses 15-cis-phytoene + A = all-trans-phytofluene + AH2. The catalysed reaction is all-trans-phytofluene + A = all-trans-zeta-carotene + AH2. It catalyses the reaction all-trans-zeta-carotene + A = all-trans-neurosporene + AH2. It carries out the reaction all-trans-neurosporene + A = all-trans-lycopene + AH2. The enzyme catalyses all-trans-lycopene + A = all-trans-3,4-didehydrolycopene + AH2. Its pathway is carotenoid biosynthesis; lycopene biosynthesis. Functionally, phytoene desaturase involved in the carotenoid biosynthesis pathway. Converts phytoene into 3,4-didehydrolycopene via the intermediates phytofluene, zeta-carotene, neurosporene and lycopene, by introducing up to five double bonds into phytoene. Is also able to desaturate 1-hydroxyneurosporene into 1-hydroxylycopene and 1-hydroxylycopene into 1-hydroxy-3,4-didehydrolycopene. Gamma-carotene and 1,19-dihydroxylycopene are not accepted as substrates. Neurosporaxanthin is synthesized from geranyl-geranyl pyrophosphate (GGPP) through several enzymatic activities. Phytoene synthase activity performed by the bifunctional enzyme al-2 first produces phytoene from geranyl-geranyl pyrophosphate (GGPP). The phytoene dehydrogenase al-1 then introduces 5 desaturations to lead to 3,4-didehydrolycopene via the intermediates phytofluene, zeta-carotene, neurosporene and lycopene. Al-2 cyclase activity then converts 3,4-didehydrolycopene into torulene. Al-2 can also convet lycopene into gamma-carotene which in turn is converted to beta-carotene by an additional al-2 cyclization reaction. Torulene is the substrate of the dioxidase cao-2 that breaks the molecule, removing five carbon atoms to yield beta-apo-4'-carotenal, whereas the aldehyde dehydrogenase ylo-1 mediates the last step by converting beta-apo-4'-carotenal into neurosporaxanthin. The chain is Phytoene desaturase from Neurospora crassa (strain ATCC 24698 / 74-OR23-1A / CBS 708.71 / DSM 1257 / FGSC 987).